The chain runs to 321 residues: Basic peroxidase (321 aa).

Residues 1–30 form the signal peptide; it reads MSYHKSSGTTLMVPLFMLLISVNYFMSCNA. Glutamine 31 carries the pyrrolidone carboxylic acid modification. Intrachain disulfides connect cysteine 41-cysteine 117, cysteine 74-cysteine 79, cysteine 123-cysteine 317, and cysteine 202-cysteine 228. Histidine 72 serves as the catalytic Proton acceptor. 5 residues coordinate Ca(2+): aspartate 73, valine 76, glycine 78, aspartate 80, and serine 82. Proline 165 contacts substrate. Residue histidine 195 coordinates heme b. Threonine 196 serves as a coordination point for Ca(2+). N-linked (GlcNAc...) asparagine glycosylation is found at asparagine 211 and asparagine 221. Positions 241, 244, and 249 each coordinate Ca(2+).

It belongs to the peroxidase family. Classical plant (class III) peroxidase subfamily. Heme b is required as a cofactor. Requires Ca(2+) as cofactor. Post-translationally, N-glycosylated. Expressed in tracheary elements, roots, young and old hypocotyls, and stems in the partially glycosylated form and in roots and young hypocotyls in the fully glycosylated form. None of the isoforms is significantly expressed in leaves or cotyledons.

The protein resides in the secreted. It carries out the reaction 2 a phenolic donor + H2O2 = 2 a phenolic radical donor + 2 H2O. Removal of H(2)O(2), oxidation of toxic reductants, biosynthesis and degradation of lignin, suberization, auxin catabolism, response to environmental stresses such as wounding, pathogen attack and oxidative stress. These functions might be dependent on each isozyme/isoform in each plant tissue. Involved in the synthesis of highly polymerized lignins. In Zinnia elegans (Garden zinnia), this protein is Basic peroxidase (POD3).